The chain runs to 295 residues: Carbapenem-hydrolyzing beta-lactamase transcriptional activator (295 aa).

Residues 5-62 (LPLNALRAFEASARYLNFTKAGLELHVSQAAVSQQVRTLEQMLGVALFTRVPRGLQLT) enclose the HTH lysR-type domain. A DNA-binding region (H-T-H motif) is located at residues 22–41 (FTKAGLELHVSQAAVSQQVR).

This sequence belongs to the LysR transcriptional regulatory family.

In terms of biological role, this protein is a positive regulator of gene expression of carbapenem-hydrolyzing beta-lactamase (NmcA). The sequence is that of Carbapenem-hydrolyzing beta-lactamase transcriptional activator (nmcR) from Enterobacter cloacae.